The primary structure comprises 475 residues: 3-isopropylmalate dehydratase large subunit (475 aa).

[4Fe-4S] cluster contacts are provided by cysteine 349, cysteine 409, and cysteine 412.

Belongs to the aconitase/IPM isomerase family. LeuC type 1 subfamily. In terms of assembly, heterodimer of LeuC and LeuD. [4Fe-4S] cluster is required as a cofactor.

The enzyme catalyses (2R,3S)-3-isopropylmalate = (2S)-2-isopropylmalate. It functions in the pathway amino-acid biosynthesis; L-leucine biosynthesis; L-leucine from 3-methyl-2-oxobutanoate: step 2/4. Functionally, catalyzes the isomerization between 2-isopropylmalate and 3-isopropylmalate, via the formation of 2-isopropylmaleate. The chain is 3-isopropylmalate dehydratase large subunit from Cereibacter sphaeroides (strain KD131 / KCTC 12085) (Rhodobacter sphaeroides).